A 425-amino-acid polypeptide reads, in one-letter code: Cyclin-K (425 aa).

The tract at residues 262–425 is disordered; sequence GKQPIPQQPP…RRYLDDDRNL (164 aa). Residues 366–377 show a composition bias toward low complexity; that stretch reads AEPAAASELDPA. The segment covering 379-399 has biased composition (pro residues); the sequence is GPAPPLPHGAPPPLPHRPPPT.

Belongs to the cyclin family.

The protein resides in the nucleus. Functionally, regulatory subunit of cyclin-dependent kinases that mediates activation of target kinases. Plays a role in transcriptional regulation via its role in regulating the phosphorylation of the C-terminal domain (CTD) of the large subunit of RNA polymerase II (POLR2A). This is Cyclin-K (ccnk) from Danio rerio (Zebrafish).